Reading from the N-terminus, the 245-residue chain is MLIIPAIDLKDGACVRLRQGRMEDSTVFSDDPVAMAAKWVDGGCRRLHLVDLNGAFEGQPVNGDVVTAIAKRYPNLPIQIGGGIRSLETIEHYIKAGVSYVIIGTKAVKDPEFVAQACRAFPGKVIVGLDAKDGFVATDGWAEVSTVQVIDLAKRFEADGVSAIVYTDIAKDGMMQGCNIPFTAALAAATRIPVIASGGIHNLGDIQALLNAKAPGIIGAITGRAIYEGTLDVAEAQALCDREQR.

The active-site Proton acceptor is Asp8. Asp130 functions as the Proton donor in the catalytic mechanism.

It belongs to the HisA/HisF family.

It is found in the cytoplasm. The enzyme catalyses 1-(5-phospho-beta-D-ribosyl)-5-[(5-phospho-beta-D-ribosylamino)methylideneamino]imidazole-4-carboxamide = 5-[(5-phospho-1-deoxy-D-ribulos-1-ylimino)methylamino]-1-(5-phospho-beta-D-ribosyl)imidazole-4-carboxamide. It functions in the pathway amino-acid biosynthesis; L-histidine biosynthesis; L-histidine from 5-phospho-alpha-D-ribose 1-diphosphate: step 4/9. This Pseudomonas syringae pv. tomato (strain ATCC BAA-871 / DC3000) protein is 1-(5-phosphoribosyl)-5-[(5-phosphoribosylamino)methylideneamino] imidazole-4-carboxamide isomerase.